Here is a 336-residue protein sequence, read N- to C-terminus: DNA-directed RNA polymerase subunit alpha (336 aa).

Residues 1 to 232 (MIQKNWQELI…DQLSVFVNFD (232 aa)) form an alpha N-terminal domain (alpha-NTD) region. The alpha C-terminal domain (alpha-CTD) stretch occupies residues 248–336 (FNPALLKKVD…DLAKRYEDQY (89 aa)).

Belongs to the RNA polymerase alpha chain family. As to quaternary structure, homodimer. The RNAP catalytic core consists of 2 alpha, 1 beta, 1 beta' and 1 omega subunit. When a sigma factor is associated with the core the holoenzyme is formed, which can initiate transcription.

It catalyses the reaction RNA(n) + a ribonucleoside 5'-triphosphate = RNA(n+1) + diphosphate. In terms of biological role, DNA-dependent RNA polymerase catalyzes the transcription of DNA into RNA using the four ribonucleoside triphosphates as substrates. The sequence is that of DNA-directed RNA polymerase subunit alpha from Sinorhizobium medicae (strain WSM419) (Ensifer medicae).